Reading from the N-terminus, the 39-residue chain is Photosystem II reaction center protein J (39 aa).

A helical transmembrane segment spans residues 7–27 (IPLWIVAVVVGLGVVTVVGLF).

Belongs to the PsbJ family. In terms of assembly, PSII is composed of 1 copy each of membrane proteins PsbA, PsbB, PsbC, PsbD, PsbE, PsbF, PsbH, PsbI, PsbJ, PsbK, PsbL, PsbM, PsbT, PsbX, PsbY, PsbZ, Psb30/Ycf12, peripheral proteins PsbO, CyanoQ (PsbQ), PsbU, PsbV and a large number of cofactors. It forms dimeric complexes.

The protein localises to the cellular thylakoid membrane. Functionally, one of the components of the core complex of photosystem II (PSII). PSII is a light-driven water:plastoquinone oxidoreductase that uses light energy to abstract electrons from H(2)O, generating O(2) and a proton gradient subsequently used for ATP formation. It consists of a core antenna complex that captures photons, and an electron transfer chain that converts photonic excitation into a charge separation. The sequence is that of Photosystem II reaction center protein J from Synechococcus sp. (strain JA-3-3Ab) (Cyanobacteria bacterium Yellowstone A-Prime).